A 253-amino-acid chain; its full sequence is uncharacterized protein (253 aa).

This is an uncharacterized protein from Bacillus subtilis (strain 168).